Here is a 1021-residue protein sequence, read N- to C-terminus: Contactin-1 (1021 aa).

The signal sequence occupies residues 1-20 (MKTPLLVSHLLLISLTSCLG). 6 consecutive Ig-like C2-type domains span residues 41 to 131 (PIFE…ATLS), 137 to 223 (PFPP…KSVF), 241 to 326 (PADI…ARIY), 331 to 407 (PEWV…AELK), 413 to 500 (PTFE…GTLV), and 504 to 603 (PTRI…LVVR). 2 disulfides stabilise this stretch: C65/C114 and C158/C211. Residues N208 and N258 are each glycosylated (N-linked (GlcNAc...) asparagine). A disulfide bridge connects residues C263 and C310. An N-linked (GlcNAc...) asparagine glycan is attached at N338. Disulfide bonds link C352/C391 and C436/C484. N457, N473, N494, and N521 each carry an N-linked (GlcNAc...) asparagine glycan. Cysteines 526 and 585 form a disulfide. The N-linked (GlcNAc...) asparagine glycan is linked to N593. Fibronectin type-III domains are found at residues 608 to 706 (PPGG…TDGA), 711 to 808 (APSD…SAQD), 813 to 908 (APTE…APPS), and 909 to 1002 (QPPR…TLSS). The tract at residues 695-719 (SIPSNRIKTDGAAPNVAPSDVGGGG) is disordered. The N-linked (GlcNAc...) asparagine glycan is linked to N935. S1001 carries the GPI-anchor amidated serine lipid modification. A propeptide spans 1002-1021 (SGLLSLLLPSLGFLVFYSEF) (removed in mature form).

The protein belongs to the immunoglobulin superfamily. Contactin family. As to quaternary structure, monomer. Interacts with NOTCH1. Interacts with CNTNAP1 in cis form and TNR. Binds to the carbonic-anhydrase like domain of PTPRZ1. Detected in a complex with NRCAM and PTPRB. Interacts with TASOR. In terms of tissue distribution, expressed by neurons, oligodendrocytes and their progenitors (at protein level). Myelination regulates the expression being down-regulated when neurons are in contact with Schwann cells.

It localises to the cell membrane. In terms of biological role, contactins mediate cell surface interactions during nervous system development. Involved in the formation of paranodal axo-glial junctions in myelinated peripheral nerves and in the signaling between axons and myelinating glial cells via its association with CNTNAP1. Participates in oligodendrocytes generation by acting as a ligand of NOTCH1. Its association with NOTCH1 promotes NOTCH1 activation through the released notch intracellular domain (NICD) and subsequent translocation to the nucleus. Interaction with TNR induces a repulsion of neurons and an inhibition of neurite outgrowth. In Rattus norvegicus (Rat), this protein is Contactin-1 (Cntn1).